Reading from the N-terminus, the 555-residue chain is Transcription factor kojR (555 aa).

Residues 21-47 (CETCKLRKRKCDGHEPCTYCLRYEYQC) constitute a DNA-binding region (zn(2)-C6 fungal-type). The disordered stretch occupies residues 51 to 73 (PHPRRKPAASKSSARPSEEEDSP).

Its subcellular location is the nucleus. Functionally, transcription factor that regulates the gene cluster that mediates the biosynthesis of 5-hydroxy-2-hydroxymethyl-1,4-pyrone, also know as kojic acid, a by-product in the fermentation process of malting rice that acts as a chelation agent. Negatively regulates the expression of the kojic acid-related protein kap1. Improves the antioxidant capacity via the accumulation of kojic acid that is also a strong oxidant. This Aspergillus oryzae (strain ATCC 42149 / RIB 40) (Yellow koji mold) protein is Transcription factor kojR.